A 368-amino-acid polypeptide reads, in one-letter code: Probable endopolygalacturonase A (368 aa).

An N-terminal signal peptide occupies residues Met1 to Ala18. A propeptide spanning residues Ala19–Arg31 is cleaved from the precursor. A disulfide bridge connects residues Cys35 and Cys50. PbH1 repeat units follow at residues Leu140–Ala162, Leu167–Glu192, Ser193–Ser214, Gly215–Ser235, Val244–Thr265, Val273–Gln295, and Thr307–Gly352. Catalysis depends on Asp207, which acts as the Proton donor. A disulfide bridge links Cys209 with Cys225. Residue His229 is part of the active site. N-linked (GlcNAc...) asparagine glycosylation occurs at Asn246. Disulfide bonds link Cys335–Cys340 and Cys359–Cys368.

Belongs to the glycosyl hydrolase 28 family.

The protein localises to the secreted. It catalyses the reaction (1,4-alpha-D-galacturonosyl)n+m + H2O = (1,4-alpha-D-galacturonosyl)n + (1,4-alpha-D-galacturonosyl)m.. Functionally, involved in maceration and soft-rotting of plant tissue. Hydrolyzes the 1,4-alpha glycosidic bonds of de-esterified pectate in the smooth region of the plant cell wall. In Neosartorya fischeri (strain ATCC 1020 / DSM 3700 / CBS 544.65 / FGSC A1164 / JCM 1740 / NRRL 181 / WB 181) (Aspergillus fischerianus), this protein is Probable endopolygalacturonase A (pgaA).